The chain runs to 107 residues: Inner membrane protein YiaW (107 aa).

The Cytoplasmic portion of the chain corresponds to 1–6 (MFLDYF). A helical membrane pass occupies residues 7 to 29 (ALGVLIFVFLVIFYGIIILHDIP). At 30–43 (YLIAKKRNHPHADA) the chain is on the periplasmic side. Residues 44–66 (IHVAGWVSLFTLHVIWPFLWIWA) form a helical membrane-spanning segment. The Cytoplasmic portion of the chain corresponds to 67–107 (TLYRPERGWGMQSHDSSVMQLQQRIAGLEKQLADIKSSSAE).

This sequence to E.coli YibI.

It is found in the cell inner membrane. This Escherichia coli O157:H7 protein is Inner membrane protein YiaW (yiaW).